The sequence spans 230 residues: Complex I assembly factor TMEM126B, mitochondrial (230 aa).

The next 4 membrane-spanning stretches (helical) occupy residues leucine 70 to valine 92, tyrosine 107 to valine 126, serine 139 to phenylalanine 161, and alanine 196 to isoleucine 218.

The protein belongs to the TMEM126 family. In terms of assembly, part of the mitochondrial complex I assembly/MCIA complex that comprises at least the core subunits TMEM126B, NDUFAF1, ECSIT and ACAD9 and complement subunits such as COA1 and TMEM186. Associates with the intermediate 370 kDa subcomplex of incompletely assembled complex I. Interacts with TMEM70.

The protein resides in the mitochondrion membrane. Its function is as follows. As part of the MCIA complex, involved in the assembly of the mitochondrial complex I. Participates in constructing the membrane arm of complex I. This Mus musculus (Mouse) protein is Complex I assembly factor TMEM126B, mitochondrial.